The sequence spans 699 residues: MAEGEDVPPLPTSSGDGWEKDLEEALEAGGCDLETLRNIIQGRPLPADLRAKVWKIALNVAGKGDSLASWDGILDLPEQNTIHKDCLQFIDQLSVPEEKAAELLLDIESVITFYCKSRNIKYSTSLSWIHLLKPLVHLQLPRSDLYNCFYAIMNKYIPRDCSQKGRPFHLFRLLIQYHEPELCSYLDTKKITPDSYALNWLGSLFACYCSTEVTQAIWDGYLQQADPFFIYFLMLIILVNAKEVILTQESDSKEEVIKFLENTPSSLNIEDIEDLFSLAQYYCSKTPASFRKDNHHLFGSTLLGIKDDDADLSQALCLAISVSEILQANQLQGEGVRFFVVDCRPAEQYNAGHLSTAFHLDSDLMLQNPSEFAQSVKSLLEAQKQSIESGSIAGGEHLCFMGSGREEEDMYMNMVLAHFLQKNKEYVSIASGGFMALQQHLADINVDGPENGYGHWIASTSGSRSSINSVDGESPNGSSDRGMKSLVNKMTVALKTKSVNVREKVISFIENTSTPVDRMSFNLPWPDRSCTERHVSSSDRVGKPYRGVKPVFSIGDEEEYDTDEIDSSSMSDDDRKEVVNIQTWINKPDVKHHFPCKEVKESGHMFPSHLLVTATHMYCLREIVSRKGLAYIQSRQALNSVVKITSKKKHPELITFKYGNSSASGIEILAIERYLIPNAGDATKAIKQQIMKVLDALES.

Residues 44–225 (PLPADLRAKV…AIWDGYLQQA (182 aa)) enclose the Rab-GAP TBC domain. Serine 300 carries the post-translational modification Phosphoserine. In terms of domain architecture, Rhodanese spans 334–446 (EGVRFFVVDC…LQQHLADINV (113 aa)). A compositionally biased stretch (polar residues) spans 459 to 479 (STSGSRSSINSVDGESPNGSS). The interval 459–483 (STSGSRSSINSVDGESPNGSSDRGM) is disordered. Phosphoserine is present on residues serine 469, serine 474, and serine 507. Threonine 514 carries the post-translational modification Phosphothreonine. The tract at residues 514-573 (TPVDRMSFNLPWPDRSCTERHVSSSDRVGKPYRGVKPVFSIGDEEEYDTDEIDSSSMSDD) is may mediate the interaction with C17orf75, FAM91A1 and WDR11. The interval 514–699 (TPVDRMSFNL…IMKVLDALES (186 aa)) is may mediate the interaction with WASHC1. Residues serine 520 and serine 571 each carry the phosphoserine modification. Residues 574–699 (DRKEVVNIQT…IMKVLDALES (126 aa)) are may mediate the interaction with FKBP15 and WASHC2; required for endosome to Golgi trafficking.

In terms of assembly, directly interacts with GOLGA1 and GOLGA4. Interacts with FAM91A1, C17ORF75 and WDR11; the interaction recruits TBC1D23 to AP-1-derived vesicles. Directly interacts with WASHC1 and WASHC2A/FAM21A. Interacts with FKBP15. In terms of tissue distribution, isoform 1: Widely expressed, including in fetal adult brain (corpus callosum, pons, cerebellum), spinal cord, heart, skeletal muscle, thymus and bone marrow, and at lower levels in spleen. Hardly detected in liver, kidney, colon and testis. Isoform 2: Expressed at high levels in liver, kidney, colon and testis. Hardly detected in tissues expressing high levels of isoform 1. Expressed at low levels in spleen.

The protein resides in the golgi apparatus. Its subcellular location is the trans-Golgi network. It is found in the cytoplasmic vesicle. Its function is as follows. Putative Rab GTPase-activating protein which plays a role in vesicular trafficking. Involved in endosome-to-Golgi trafficking. Acts as a bridging protein by binding simultaneously to golgins, including GOLGA1 and GOLGA4, located at the trans-Golgi, and to the WASH complex, located on endosome-derived vesicles. Together with WDR11 complex facilitates the golgin-mediated capture of vesicles generated using AP-1. Plays a role in brain development, including in cortical neuron positioning. May also be important for neurite outgrowth, possibly through its involvement in membrane trafficking and cargo delivery, 2 processes that are essential for axonal and dendritic growth. May act as a general inhibitor of innate immunity signaling, strongly inhibiting multiple TLR and dectin/CLEC7A-signaling pathways. Does not alter initial activation events, but instead affects maintenance of inflammatory gene expression several hours after bacterial lipopolysaccharide (LPS) challenge. This chain is TBC1 domain family member 23 (TBC1D23), found in Homo sapiens (Human).